The sequence spans 292 residues: Glutamate racemase (292 aa).

Substrate is bound by residues Asp-28–Ser-29 and Tyr-60–Gly-61. Cys-91 acts as the Proton donor/acceptor in catalysis. Asn-92–Thr-93 is a binding site for substrate. Cys-200 acts as the Proton donor/acceptor in catalysis. Thr-201–His-202 is a binding site for substrate.

This sequence belongs to the aspartate/glutamate racemases family.

The catalysed reaction is L-glutamate = D-glutamate. Its pathway is cell wall biogenesis; peptidoglycan biosynthesis. Provides the (R)-glutamate required for cell wall biosynthesis. This is Glutamate racemase from Trichormus variabilis (strain ATCC 29413 / PCC 7937) (Anabaena variabilis).